Here is a 260-residue protein sequence, read N- to C-terminus: Small ribosomal subunit protein uS2 (260 aa).

Residues 240 to 260 (VLKPKLPYQPNRRPYQETVKK) are disordered.

Belongs to the universal ribosomal protein uS2 family.

The chain is Small ribosomal subunit protein uS2 from Phytoplasma australiense.